The following is a 522-amino-acid chain: Exo-alpha-(1-&gt;6)-L-arabinofuranosidase (522 aa).

Alpha-L-arabinofuranose contacts are provided by glutamate 39, asparagine 84, and asparagine 185. The active-site Proton donor/acceptor is the glutamate 186. Alpha-L-arabinofuranose is bound by residues tyrosine 257, glutamate 310, and glutamine 370. Glutamate 310 functions as the Nucleophile in the catalytic mechanism.

It belongs to the glycosyl hydrolase 51 family. In terms of assembly, homohexamer; trimer of dimers.

The enzyme catalyses Hydrolysis of terminal non-reducing alpha-L-arabinofuranoside residues in alpha-L-arabinosides.. It carries out the reaction (20S)-ginsenoside Rc + H2O = L-arabinofuranose + (20S)-ginsenoside Rd. With respect to regulation, completely inhibited by Cu(2+) and partially inhibited by Co(2+) and Ba(2+). In terms of biological role, catalyzes the hydrolysis of p-nitrophenyl-alpha-L-arabinofuranoside (pNP-alphaL-Af) and the hydrolysis of the terminal alpha-L-arabinofuranoside at the C20 position of ginsenoside Rc to produce ginsenoside Rd. Cannot hydrolyze p-nitrophenyl-alpha-L-arabinopyranoside (pNP-alphaL-Ap) and ginsenoside Rb2. The polypeptide is Exo-alpha-(1-&gt;6)-L-arabinofuranosidase (Bifidobacterium longum).